A 229-amino-acid polypeptide reads, in one-letter code: MQGAASHDAAAAAAAAAVLGGGHGVPRWPRMVFLVGAMTCLAISATAHLLACHSRRASVVFWQLDYAGISAMIVASFVPPVYYAFLCHRPARVAYLSAISALGALVVGALLSPPCSSPRFRRLRAALFLAMGLSGVVPALHALWLNWGHAACYLALSLEVAMGLAYAAGAWFYVSRVPEKWRPGVFDVVGHSHQIFHVLVLVGAVTHYVAVDVLLNWRETVAAACSATS.

The Cytoplasmic segment spans residues 1–4 (MQGA). The chain crosses the membrane as a helical span at residues 5–25 (ASHDAAAAAAAAAVLGGGHGV). The Extracellular portion of the chain corresponds to 26 to 30 (PRWPR). The chain crosses the membrane as a helical span at residues 31–51 (MVFLVGAMTCLAISATAHLLA). The Cytoplasmic portion of the chain corresponds to 52 to 66 (CHSRRASVVFWQLDY). Residues 67–87 (AGISAMIVASFVPPVYYAFLC) traverse the membrane as a helical segment. The Extracellular segment spans residues 88–92 (HRPAR). Residues 93–113 (VAYLSAISALGALVVGALLSP) traverse the membrane as a helical segment. Over 114–124 (PCSSPRFRRLR) the chain is Cytoplasmic. A helical transmembrane segment spans residues 125-145 (AALFLAMGLSGVVPALHALWL). Topologically, residues 146 to 153 (NWGHAACY) are extracellular. Residues 154–174 (LALSLEVAMGLAYAAGAWFYV) traverse the membrane as a helical segment. Over 175 to 194 (SRVPEKWRPGVFDVVGHSHQ) the chain is Cytoplasmic. The chain crosses the membrane as a helical span at residues 195–215 (IFHVLVLVGAVTHYVAVDVLL). The Extracellular portion of the chain corresponds to 216-229 (NWRETVAAACSATS).

Belongs to the ADIPOR family.

It localises to the membrane. Its function is as follows. May play a role in abiotic stress response. The protein is Heptahelical transmembrane protein ADIPOR2 (ADIPOR2) of Oryza sativa subsp. japonica (Rice).